The following is a 218-amino-acid chain: Peptide methionine sulfoxide reductase MsrA (218 aa).

Cys-57 is a catalytic residue.

This sequence belongs to the MsrA Met sulfoxide reductase family.

The enzyme catalyses L-methionyl-[protein] + [thioredoxin]-disulfide + H2O = L-methionyl-(S)-S-oxide-[protein] + [thioredoxin]-dithiol. It catalyses the reaction [thioredoxin]-disulfide + L-methionine + H2O = L-methionine (S)-S-oxide + [thioredoxin]-dithiol. Has an important function as a repair enzyme for proteins that have been inactivated by oxidation. Catalyzes the reversible oxidation-reduction of methionine sulfoxide in proteins to methionine. This is Peptide methionine sulfoxide reductase MsrA from Brucella melitensis biotype 1 (strain ATCC 23456 / CCUG 17765 / NCTC 10094 / 16M).